A 120-amino-acid chain; its full sequence is UPF0342 protein Csac_0863 (120 aa).

It belongs to the UPF0342 family.

The sequence is that of UPF0342 protein Csac_0863 from Caldicellulosiruptor saccharolyticus (strain ATCC 43494 / DSM 8903 / Tp8T 6331).